Reading from the N-terminus, the 204-residue chain is UPF0637 protein SAB0972c (204 aa).

The protein belongs to the UPF0637 family.

In Staphylococcus aureus (strain bovine RF122 / ET3-1), this protein is UPF0637 protein SAB0972c.